Reading from the N-terminus, the 300-residue chain is Fructose-bisphosphate aldolase class 1 (300 aa).

Catalysis depends on Glu181, which acts as the Proton acceptor. Lys218 (schiff-base intermediate with dihydroxyacetone-P) is an active-site residue.

This sequence belongs to the class I fructose-bisphosphate aldolase family.

It carries out the reaction beta-D-fructose 1,6-bisphosphate = D-glyceraldehyde 3-phosphate + dihydroxyacetone phosphate. It participates in carbohydrate degradation; glycolysis; D-glyceraldehyde 3-phosphate and glycerone phosphate from D-glucose: step 4/4. This Synechocystis sp. (strain ATCC 27184 / PCC 6803 / Kazusa) protein is Fructose-bisphosphate aldolase class 1 (fda).